A 370-amino-acid polypeptide reads, in one-letter code: Metallophosphoesterase 1 homolog (370 aa).

Residues 7–27 traverse the membrane as a helical segment; it reads CFVIVLCALIFCEYVADFVVL. Positions 52, 94, 132, 225, 275, and 277 each coordinate a divalent metal cation. The chain crosses the membrane as a helical span at residues 328–348; the sequence is FVFNSYLSAGILCLIVIGFQL.

Belongs to the metallophosphoesterase superfamily. MPPE1 family. Requires Mn(2+) as cofactor.

Its subcellular location is the membrane. Its function is as follows. Metallophosphoesterase. The chain is Metallophosphoesterase 1 homolog (PGAP5) from Drosophila melanogaster (Fruit fly).